The chain runs to 596 residues: Fructan 1-exohydrolase w2 (596 aa).

The first 20 residues, 1-20 (MAQAWAFLLPVLVLGSYVTS), serve as a signal peptide directing secretion. Asp75 is an active-site residue. Asn168, Asn236, and Asn248 each carry an N-linked (GlcNAc...) asparagine glycan. Cys446 and Cys492 are oxidised to a cystine. Asn567 carries N-linked (GlcNAc...) asparagine glycosylation.

This sequence belongs to the glycosyl hydrolase 32 family.

The catalysed reaction is Hydrolysis of terminal, non-reducing (2-&gt;1)-linked beta-D-fructofuranose residues in fructans.. With respect to regulation, inhibited by sucrose. Hydrolyzes inulin-type beta-(2,1)-fructans, but not beta-(2,1)-linkages in branched fructans. Has low activity against beta-(2,6)-linked fructans. May play a role as a beta-(2,1)-trimmer during graminan biosynthesis. This is Fructan 1-exohydrolase w2 from Triticum aestivum (Wheat).